Here is a 1727-residue protein sequence, read N- to C-terminus: Gag-Pol polyprotein (1727 aa).

Gly-2 carries the N-myristoyl glycine; by host lipid modification. The PTAP/PSAP motif motif lies at 109-112 (STLL). The LYPX(n)L motif signature appears at 128–132 (VLPDE). Disordered stretches follow at residues 137–221 (LLFQ…PSTW), 302–322 (KNVP…DEGF), 443–471 (KRET…KRDK), and 515–547 (DCPK…GAPP). A compositionally biased stretch (pro residues) spans 143–165 (LPHPPHNPLLEPPPYNSPSPPVL). The PPXY motif motif lies at 154–157 (PPPY). Residues 166-187 (SPVSPTTPSAPTPSSLVSSSTP) show a composition bias toward low complexity. The span at 188–204 (PSSPAPPELTPRTPPQT) shows a compositional bias: pro residues. 2 stretches are compositionally biased toward basic and acidic residues: residues 443 to 465 (KRET…EDRR) and 515 to 525 (DCPKRPRDQKK). Residues 501–518 (DQCAYCKERGHWIKDCPK) form a CCHC-type zinc finger. Residues 560 to 630 (TTFLVDTGAQ…CPYPLLGRDL (71 aa)) form the Peptidase A2 domain. Asp-565 (protease; shared with dimeric partner) is an active-site residue. Positions 736-929 (KFLELGVLRP…TKVTYLGYIL (194 aa)) constitute a Reverse transcriptase domain. Mg(2+)-binding residues include Asp-806, Asp-880, Asp-881, Asp-1181, Glu-1219, Asp-1240, and Asp-1310. Positions 1172 to 1318 (PDADHTWYTD…ADRVARQAAM (147 aa)) constitute an RNase H type-1 domain. The HHCC-type zinc finger occupies 1383 to 1421 (HAWTHLGNRKLKLLIEKTDFLIPRASTLIEQVTSACKVC). The Integrase catalytic domain occupies 1438 to 1596 (RGNRPGVYWE…TPYEILYGGP (159 aa)). 2 residues coordinate Mg(2+): Asp-1449 and Asp-1508.

It belongs to the retroviral Pol polyprotein family. Homohexamer; further associates as homomultimer. The virus core is composed of a lattice formed from hexagonal rings, each containing six capsid monomers. As to quaternary structure, interacts (via PPXY motif) with host NEDD4. Interacts (via PSAP motif) with host TSG101. Interacts (via LYPX(n)L motif) with host PDCD6IP. In terms of assembly, the reverse transcriptase is a monomer (Potential). Interacts (via RNase domains) with host release factor ETF1; this interaction is essential for translational readthrough of amber codon between viral gag and pol genes, as well as for viral replication. Homodimer. The cofactor is Mg(2+). In terms of processing, specific enzymatic cleavages by the viral protease yield mature proteins. The protease is released by autocatalytic cleavage. The polyprotein is cleaved during and after budding, this process is termed maturation. Phosphorylated on serine residues.

It is found in the virion. It localises to the host cell membrane. The protein localises to the host late endosome membrane. Its subcellular location is the host endosome. The protein resides in the host multivesicular body. It is found in the host cytoplasm. The enzyme catalyses DNA(n) + a 2'-deoxyribonucleoside 5'-triphosphate = DNA(n+1) + diphosphate. It catalyses the reaction Endonucleolytic cleavage to 5'-phosphomonoester.. Most efficiently inhibited by Amprenavir, which is able to block Gag-Pol processing in infected cells. In terms of biological role, plays a role in budding and is processed by the viral protease during virion maturation outside the cell. During budding, it recruits, in a PPXY-dependent or independent manner, Nedd4-like ubiquitin ligases that conjugate ubiquitin molecules to Gag-Pol, or to Gag-Pol binding host factors. Interaction with HECT ubiquitin ligases probably links the viral protein to the host ESCRT pathway and facilitates release. Its function is as follows. Targets Gag and gag-pol polyproteins to the plasma membrane via a multipartite membrane binding signal, that includes its myristoylated N-terminus. Also mediates nuclear localization of the pre-integration complex. Functionally, constituent of the pre-integration complex (PIC) which tethers the latter to mitotic chromosomes. This allows the integration of the viral genome into the host DNA. Forms the spherical core of the virion that encapsulates the genomic RNA-nucleocapsid complex. In terms of biological role, involved in the packaging and encapsidation of two copies of the genome. Binds with high affinity to conserved UCUG elements within the packaging signal, located near the 5'-end of the genome. This binding is dependent on genome dimerization. Acts as a nucleic acid chaperone which is involved in rearrangement of nucleic acid secondary structures during gRNA retrotranscription. Its function is as follows. The aspartyl protease mediates proteolytic cleavages of Gag and Gag-Pol polyproteins during or shortly after the release of the virion from the plasma membrane. Cleavages take place as an ordered, step-wise cascade to yield mature proteins. This process is called maturation. Displays maximal activity during the budding process just prior to particle release from the cell. Functionally, RT is a multifunctional enzyme that converts the viral dimeric RNA genome into dsDNA in the cytoplasm, shortly after virus entry into the cell. This enzyme displays a DNA polymerase activity that can copy either DNA or RNA templates, and a ribonuclease H (RNase H) activity that cleaves the RNA strand of RNA-DNA heteroduplexes in a partially processive 3' to 5' endonucleasic mode. Conversion of viral genomic RNA into dsDNA requires many steps. A tRNA binds to the primer-binding site (PBS) situated at the 5' end of the viral RNA. RT uses the 3' end of the tRNA primer to perform a short round of RNA-dependent minus-strand DNA synthesis. The reading proceeds through the U5 region and ends after the repeated (R) region which is present at both ends of viral RNA. The portion of the RNA-DNA heteroduplex is digested by the RNase H, resulting in a ssDNA product attached to the tRNA primer. This ssDNA/tRNA hybridizes with the identical R region situated at the 3' end of viral RNA. This template exchange, known as minus-strand DNA strong stop transfer, can be either intra- or intermolecular. RT uses the 3' end of this newly synthesized short ssDNA to perform the RNA-dependent minus-strand DNA synthesis of the whole template. RNase H digests the RNA template except for a polypurine tract (PPT) situated at the 5' end of the genome. It is not clear if both polymerase and RNase H activities are simultaneous. RNase H probably can proceed both in a polymerase-dependent (RNA cut into small fragments by the same RT performing DNA synthesis) and a polymerase-independent mode (cleavage of remaining RNA fragments by free RTs). Secondly, RT performs DNA-directed plus-strand DNA synthesis using the PPT that has not been removed by RNase H as primers. PPT and tRNA primers are then removed by RNase H. The 3' and 5' ssDNA PBS regions hybridize to form a circular dsDNA intermediate. Strand displacement synthesis by RT to the PBS and PPT ends produces a blunt ended, linear dsDNA copy of the viral genome that includes long terminal repeats (LTRs) at both ends. Catalyzes viral DNA integration into the host chromosome, by performing a series of DNA cutting and joining reactions. This enzyme activity takes place after virion entry into a cell and reverse transcription of the RNA genome in dsDNA. The first step in the integration process is 3' processing. This step requires a complex comprising the viral genome, matrix protein and integrase. This complex is called the pre-integration complex (PIC). The integrase protein removes 2 nucleotides from each 3' end of the viral DNA, leaving recessed CA OH's at the 3' ends. In the second step that requires cell division, the PIC enters cell nucleus. In the third step, termed strand transfer, the integrase protein joins the previously processed 3' ends to the 5' ends of strands of target cellular DNA at the site of integration. The last step is viral DNA integration into host chromosome. This chain is Gag-Pol polyprotein (pol), found in Papio (baboons).